A 149-amino-acid chain; its full sequence is Cytochrome c-556 (149 aa).

The signal sequence occupies residues 1–20; the sequence is MLRTVIVAGALVLTASAVMA. Heme c contacts are provided by methionine 32, cysteine 137, cysteine 140, and histidine 141.

As to quaternary structure, monomer. Post-translationally, binds 1 heme c group covalently per subunit.

Functionally, low-spin monoheme cytochrome c. The protein is Cytochrome c-556 of Rhodopseudomonas palustris (strain ATCC BAA-98 / CGA009).